Reading from the N-terminus, the 450-residue chain is ATP-dependent protease ATPase subunit HslU (450 aa).

ATP-binding positions include Val29, 71–76 (GVGKTE), Asp261, Glu328, and Arg400.

The protein belongs to the ClpX chaperone family. HslU subfamily. A double ring-shaped homohexamer of HslV is capped on each side by a ring-shaped HslU homohexamer. The assembly of the HslU/HslV complex is dependent on binding of ATP.

It localises to the cytoplasm. In terms of biological role, ATPase subunit of a proteasome-like degradation complex; this subunit has chaperone activity. The binding of ATP and its subsequent hydrolysis by HslU are essential for unfolding of protein substrates subsequently hydrolyzed by HslV. HslU recognizes the N-terminal part of its protein substrates and unfolds these before they are guided to HslV for hydrolysis. This Rickettsia conorii (strain ATCC VR-613 / Malish 7) protein is ATP-dependent protease ATPase subunit HslU.